A 259-amino-acid chain; its full sequence is PKHD-type hydroxylase PsycPRwf_1523 (259 aa).

One can recognise a Fe2OG dioxygenase domain in the interval 80-180 (VIMPPLFSAY…RLAMVTWVQS (101 aa)). Residues His98, Asp100, and His161 each coordinate Fe cation. Arg171 is a binding site for 2-oxoglutarate.

It depends on Fe(2+) as a cofactor. L-ascorbate serves as cofactor.

In Psychrobacter sp. (strain PRwf-1), this protein is PKHD-type hydroxylase PsycPRwf_1523.